Consider the following 352-residue polypeptide: Tubby-like F-box protein 10 (352 aa).

Positions 1 to 11 (MAAVREPREEA) are enriched in basic and acidic residues. The disordered stretch occupies residues 1 to 23 (MAAVREPREEAAVGEGEGEEEGR). The region spanning 22-78 (GRWGGLLPELVEEVVRRVEASGGERWPARKDLVSCACVCRRWREAAAAVVRPLPESG) is the F-box domain.

Belongs to the TUB family. As to expression, ubiquitous.

In Oryza sativa subsp. japonica (Rice), this protein is Tubby-like F-box protein 10 (TULP10).